The sequence spans 413 residues: ATP-dependent RNA helicase RhlB (413 aa).

Positions Gln-9–Ala-37 match the Q motif motif. Residues Leu-40 to Ile-217 form the Helicase ATP-binding domain. Ala-53–Thr-60 is an ATP binding site. The short motif at Asp-163–Asp-166 is the DEAD box element. Residues Lys-241 to Ile-388 form the Helicase C-terminal domain.

This sequence belongs to the DEAD box helicase family. RhlB subfamily. As to quaternary structure, component of the RNA degradosome, which is a multiprotein complex involved in RNA processing and mRNA degradation.

The protein localises to the cytoplasm. It catalyses the reaction ATP + H2O = ADP + phosphate + H(+). In terms of biological role, DEAD-box RNA helicase involved in RNA degradation. Has RNA-dependent ATPase activity and unwinds double-stranded RNA. This is ATP-dependent RNA helicase RhlB from Actinobacillus succinogenes (strain ATCC 55618 / DSM 22257 / CCUG 43843 / 130Z).